A 246-amino-acid chain; its full sequence is Protein 3F (246 aa).

The first 19 residues, 1–19 (MKLLSKLILTLALATYASA), serve as a signal peptide directing secretion. N-linked (GlcNAc...) asparagine glycosylation is present at N52. Residues 113–124 (EVRPIDRLKDNA) are compositionally biased toward basic and acidic residues. The segment at 113–223 (EVRPIDRLKD…EEAEHVEKGA (111 aa)) is disordered. The span at 126-145 (AANTENAQKSPNTQSTQKGS) shows a compositional bias: polar residues. Tandem repeats lie at residues 145 to 153 (SPKSDAKEA), 154 to 162 (SPKTDAKEA), and 163 to 171 (SPKSDAKEA). Residues 145 to 176 (SPKSDAKEASPKTDAKEASPKSDAKEASPKTD) form a 3.5 X 9 AA tandem repeats of S-P-K-[ST]-D-A-K-E-A region. The span at 146–177 (PKSDAKEASPKTDAKEASPKSDAKEASPKTDT) shows a compositional bias: basic and acidic residues. A 4; truncated repeat occupies 172 to 176 (SPKTD). The segment covering 181-213 (SSPKTDTKSSTQKPSSSSDSSKAKAEANTAANN) has biased composition (low complexity).

The chain is Protein 3F (pspG) from Dictyostelium discoideum (Social amoeba).